A 130-amino-acid polypeptide reads, in one-letter code: Small ribosomal subunit protein uS17m (130 aa).

Residues 1 to 20 (MSVVRSSVHARWIVGKVIGT) constitute a mitochondrion transit peptide.

The protein belongs to the universal ribosomal protein uS17 family. As to quaternary structure, component of the mitochondrial small ribosomal subunit (mt-SSU). Mature mammalian 55S mitochondrial ribosomes consist of a small (28S) and a large (39S) subunit. The 28S small subunit contains a 12S ribosomal RNA (12S mt-rRNA) and 30 different proteins. The 39S large subunit contains a 16S rRNA (16S mt-rRNA), a copy of mitochondrial valine transfer RNA (mt-tRNA(Val)), which plays an integral structural role, and 52 different proteins.

It localises to the mitochondrion. In Homo sapiens (Human), this protein is Small ribosomal subunit protein uS17m (MRPS17).